A 437-amino-acid polypeptide reads, in one-letter code: UDP-N-acetylmuramoylalanine--D-glutamate ligase (437 aa).

Residue 112–118 (GSNGKST) coordinates ATP.

It belongs to the MurCDEF family.

Its subcellular location is the cytoplasm. It catalyses the reaction UDP-N-acetyl-alpha-D-muramoyl-L-alanine + D-glutamate + ATP = UDP-N-acetyl-alpha-D-muramoyl-L-alanyl-D-glutamate + ADP + phosphate + H(+). Its pathway is cell wall biogenesis; peptidoglycan biosynthesis. Functionally, cell wall formation. Catalyzes the addition of glutamate to the nucleotide precursor UDP-N-acetylmuramoyl-L-alanine (UMA). The chain is UDP-N-acetylmuramoylalanine--D-glutamate ligase from Haemophilus influenzae (strain PittEE).